Reading from the N-terminus, the 737-residue chain is MSQQLQEIEKVLSSHKLSGDDYAHIKQILGREPNLVEIGIFSAMWSEHCSYKSSKVHLSGFPTKAPWVIQGPGENAGVIDIGGGYAAVFKMESHNHPSFIEPYQGAATGVGGIMRDVFTMGARPIANLNALRFGDVLKDNKTSAHQRYLVRGVVAGIGGYGNCMGVPTIGGETSFDECYNGNILVNAFTLGLAKSDEIFYGRADGIGNPVIYVGAKTGRDGLGGAVMSSDSFTEESKSLRPTVQVGDPFTEKLLLEACLELFKTDHVVGIQDMGAAGLTSSSFEMAGRSGSGMIMHLDRVPAREEGMTPYDFMLSESQERMLLCAKKGSEAEIIKIFEKWDLDAAVIGEVTATGNMELFWHGDKVAEVPVNPVSEEAPVLNRPMSRPAYLDKIASVTIDDFARVPNQEAFERLTKSMEVVDKSWIYTQYDSMVQTNTIKKGGMLDASVVRVKENGKALAMSADCNVRYCYIDPKGGAAAAVIESGRNVAMSGARPLAITDCLNFGNPENPEVMWQFGQSCLGIKEACSALTTPVIGGNVSLYNETNGVSVFPTPSIATVGVNDDQNKVLMSSFQGEGNTLYLVGESNSEFGGSLYMKEICGVVAGVLPEIDYEKELTLWDLVIEANKKGILECAKDASSGGVAIALAKMAAVSGLGCSARMLVNDERDIFAESMSRAIIEVKQENSASFESMAGVLQCQKLGTVGGDIVKINNVSMSMKELQDNYFNTFKRVIERDI.

The active site involves H48. Y51 and K90 together coordinate ATP. E92 provides a ligand contact to Mg(2+). Residues S93–H96 and R115 each bind substrate. Catalysis depends on H94, which acts as the Proton acceptor. D116 is a Mg(2+) binding site. Q244 is a substrate binding site. D272 lines the Mg(2+) pocket. E316 to Q318 serves as a coordination point for substrate. ATP contacts are provided by D500 and G537. N538 contributes to the Mg(2+) binding site. Substrate is bound at residue S540.

Belongs to the FGAMS family. Monomer. Part of the FGAM synthase complex composed of 1 PurL, 1 PurQ and 2 PurS subunits.

Its subcellular location is the cytoplasm. It carries out the reaction N(2)-formyl-N(1)-(5-phospho-beta-D-ribosyl)glycinamide + L-glutamine + ATP + H2O = 2-formamido-N(1)-(5-O-phospho-beta-D-ribosyl)acetamidine + L-glutamate + ADP + phosphate + H(+). It functions in the pathway purine metabolism; IMP biosynthesis via de novo pathway; 5-amino-1-(5-phospho-D-ribosyl)imidazole from N(2)-formyl-N(1)-(5-phospho-D-ribosyl)glycinamide: step 1/2. Functionally, part of the phosphoribosylformylglycinamidine synthase complex involved in the purines biosynthetic pathway. Catalyzes the ATP-dependent conversion of formylglycinamide ribonucleotide (FGAR) and glutamine to yield formylglycinamidine ribonucleotide (FGAM) and glutamate. The FGAM synthase complex is composed of three subunits. PurQ produces an ammonia molecule by converting glutamine to glutamate. PurL transfers the ammonia molecule to FGAR to form FGAM in an ATP-dependent manner. PurS interacts with PurQ and PurL and is thought to assist in the transfer of the ammonia molecule from PurQ to PurL. This is Phosphoribosylformylglycinamidine synthase subunit PurL from Sulfurimonas denitrificans (strain ATCC 33889 / DSM 1251) (Thiomicrospira denitrificans (strain ATCC 33889 / DSM 1251)).